The primary structure comprises 1042 residues: Ubiquitin carboxyl-terminal hydrolase 38 (1042 aa).

The USP domain occupies 445-949 (TGLINLGNTC…TAYVLLYKKQ (505 aa)). C454 acts as the Nucleophile in catalysis. H857 functions as the Proton acceptor in the catalytic mechanism.

This sequence belongs to the peptidase C19 family. Interacts with isoform 1 of FBXW7; this interaction prevents FBXW7-mediated degradation of MYC.

The protein resides in the cytoplasm. Its subcellular location is the nucleus. It carries out the reaction Thiol-dependent hydrolysis of ester, thioester, amide, peptide and isopeptide bonds formed by the C-terminal Gly of ubiquitin (a 76-residue protein attached to proteins as an intracellular targeting signal).. Functionally, deubiquitinating enzyme that plays a role in various cellular processes, including DNA repair, cell cycle regulation, and immune response. Plays a role in the inhibition of type I interferon signaling by mediating the 'Lys-33' to 'Lys-48' ubiquitination transition of TBK1 leading to its degradation. Cleaves the ubiquitin chain from the histone demethylase LSD1/KDM1A and prevents it from degradation by the 26S proteasome, thus maintaining LSD1 protein level in cells. Plays a role in the DNA damage response by regulating the deacetylase activity of HDAC1. Mechanistically, removes the 'Lys-63'-linked ubiquitin chain promoting the deacetylase activity of HDAC1 in response to DNA damage. Also acts as a specific deubiquitinase of histone deacetylase 3/HDAC3 and cleaves its 'Lys-63'-linked ubiquitin chains to lower its histone deacetylase activity. Regulates MYC levels and cell proliferation via antagonizing ubiquitin E3 ligase FBXW7 thereby preventing MYC 'Lys-48'-linked ubiquitination and degradation. Participates in antiviral response by removing both 'Lys-48'-linked and 'Lys-63'-linked polyubiquitination of Zika virus envelope protein E. Constitutively associated with IL-33R/IL1RL1, deconjugates its 'Lys-27'-linked polyubiquitination resulting in its autophagic degradation. The sequence is that of Ubiquitin carboxyl-terminal hydrolase 38 (Usp38) from Mus musculus (Mouse).